Reading from the N-terminus, the 238-residue chain is Large ribosomal subunit protein uL2 (238 aa).

The segment at 201 to 238 is disordered; it reads PFGGGGRQHPGRPKTVSRNTPPGRKVGSIAARRTGVGH.

The protein belongs to the universal ribosomal protein uL2 family. As to quaternary structure, part of the 50S ribosomal subunit. Forms a bridge to the 30S subunit in the 70S ribosome.

Its function is as follows. One of the primary rRNA binding proteins. Required for association of the 30S and 50S subunits to form the 70S ribosome, for tRNA binding and peptide bond formation. It has been suggested to have peptidyltransferase activity; this is somewhat controversial. Makes several contacts with the 16S rRNA in the 70S ribosome. This chain is Large ribosomal subunit protein uL2, found in Methanocella arvoryzae (strain DSM 22066 / NBRC 105507 / MRE50).